The sequence spans 246 residues: tRNA pseudouridine synthase A (246 aa).

Asp-52 serves as the catalytic Nucleophile. Substrate is bound at residue Tyr-111.

It belongs to the tRNA pseudouridine synthase TruA family. In terms of assembly, homodimer.

It catalyses the reaction uridine(38/39/40) in tRNA = pseudouridine(38/39/40) in tRNA. Its function is as follows. Formation of pseudouridine at positions 38, 39 and 40 in the anticodon stem and loop of transfer RNAs. The sequence is that of tRNA pseudouridine synthase A from Borreliella burgdorferi (strain ATCC 35210 / DSM 4680 / CIP 102532 / B31) (Borrelia burgdorferi).